Consider the following 85-residue polypeptide: Toxin To6 (85 aa).

Positions 1–20 (MSIFPIILALLLIGLDEGEA) are cleaved as a signal peptide. The 63-residue stretch at 21-83 (LDGYPLSKNN…EMYPGRLPCN (63 aa)) folds into the LCN-type CS-alpha/beta domain. 4 disulfide bridges follow: C32/C82, C36/C59, C42/C64, and C46/C66.

As to expression, expressed by the venom gland.

The protein localises to the secreted. Beta toxins bind voltage-independently at site-4 of sodium channels (Nav) and shift the voltage of activation toward more negative potentials thereby affecting sodium channel activation and promoting spontaneous and repetitive firing. The sequence is that of Toxin To6 from Tityus obscurus (Amazonian scorpion).